Here is a 121-residue protein sequence, read N- to C-terminus: Large ribosomal subunit protein uL14 (121 aa).

Belongs to the universal ribosomal protein uL14 family. As to quaternary structure, part of the 50S ribosomal subunit. Forms a cluster with proteins L3 and L19. In the 70S ribosome, L14 and L19 interact and together make contacts with the 16S rRNA in bridges B5 and B8.

Binds to 23S rRNA. Forms part of two intersubunit bridges in the 70S ribosome. This Synechococcus sp. (strain CC9311) protein is Large ribosomal subunit protein uL14.